Here is a 343-residue protein sequence, read N- to C-terminus: Methionine import ATP-binding protein MetN (343 aa).

One can recognise an ABC transporter domain in the interval 2-241 (IKLSNITKVF…PKTPLAQKFI (240 aa)). 38–45 (GASGAGKS) contacts ATP.

It belongs to the ABC transporter superfamily. Methionine importer (TC 3.A.1.24) family. As to quaternary structure, the complex is composed of two ATP-binding proteins (MetN), two transmembrane proteins (MetI) and a solute-binding protein (MetQ).

Its subcellular location is the cell inner membrane. It carries out the reaction L-methionine(out) + ATP + H2O = L-methionine(in) + ADP + phosphate + H(+). The enzyme catalyses D-methionine(out) + ATP + H2O = D-methionine(in) + ADP + phosphate + H(+). Its function is as follows. Part of the ABC transporter complex MetNIQ involved in methionine import. Responsible for energy coupling to the transport system. In Escherichia coli O6:K15:H31 (strain 536 / UPEC), this protein is Methionine import ATP-binding protein MetN.